Consider the following 354-residue polypeptide: Uroporphyrinogen decarboxylase (354 aa).

Substrate-binding positions include 30–34 (RQAGR), D79, Y154, S209, and H333.

Belongs to the uroporphyrinogen decarboxylase family. Homodimer.

It localises to the cytoplasm. It catalyses the reaction uroporphyrinogen III + 4 H(+) = coproporphyrinogen III + 4 CO2. The protein operates within porphyrin-containing compound metabolism; protoporphyrin-IX biosynthesis; coproporphyrinogen-III from 5-aminolevulinate: step 4/4. Functionally, catalyzes the decarboxylation of four acetate groups of uroporphyrinogen-III to yield coproporphyrinogen-III. The protein is Uroporphyrinogen decarboxylase of Mycobacterium sp. (strain JLS).